The following is a 586-amino-acid chain: Switch-associated protein 70 (586 aa).

A PH domain is found at 210–306 (DVLKQGYMLK…WIQAIQTTVS (97 aa)). A coiled-coil region spans residues 316–538 (HKEARQKRKE…NNTRSWKDKV (223 aa)).

As to quaternary structure, the SWAP complex consists of NPM1, NCL, PARP1 and SWAP70. In terms of processing, tyrosine-phosphorylated.

It is found in the cytoplasm. The protein localises to the cell membrane. The protein resides in the nucleus. Its subcellular location is the cell projection. It localises to the lamellipodium. Phosphatidylinositol 3,4,5-trisphosphate-dependent guanine nucleotide exchange factor (GEF) which, independently of RAS, transduces signals from tyrosine kinase receptors to RAC. It also mediates signaling of membrane ruffling. Regulates the actin cytoskeleton as an effector or adapter protein in response to agonist stimulated phosphatidylinositol (3,4)-bisphosphate production and cell protrusion. This Gallus gallus (Chicken) protein is Switch-associated protein 70 (SWAP70).